Consider the following 183-residue polypeptide: UPF0397 protein PBPRA2239 (183 aa).

5 consecutive transmembrane segments (helical) span residues Val8–Ile28, Ala41–Ile61, Phe69–Ile89, Phe110–Tyr130, and Leu147–Thr167.

Belongs to the UPF0397 family.

Its subcellular location is the cell membrane. This chain is UPF0397 protein PBPRA2239, found in Photobacterium profundum (strain SS9).